A 508-amino-acid chain; its full sequence is Cytochrome P450 monooxygenase aflV (508 aa).

Residues 18–38 form a helical membrane-spanning segment; that stretch reads LTWWFLAVGGAWIVSKIIKIL. N-linked (GlcNAc...) asparagine glycans are attached at residues asparagine 192, asparagine 209, asparagine 302, and asparagine 408. Cysteine 453 serves as a coordination point for heme.

The protein belongs to the cytochrome P450 family. Heme is required as a cofactor.

It localises to the membrane. The protein operates within mycotoxin biosynthesis; aflatoxin biosynthesis. Functionally, cytochrome P450 monooxygenase; part of the gene cluster that mediates the biosynthesis of aflatoxins, a group of polyketide-derived furanocoumarins, and part of the most toxic and carcinogenic compounds among the known mycotoxins. The four major aflatoxins produced by A.parasiticus are aflatoxin B1 (AFB1), aflatoxin B2 (AFB2), aflatoxin G1 (AFG1) and aflatoxin G2 (AFG2). The role of the cytochrome P450 monooxygenase aflV in aflatoxin biosynthesis has still to be characterized. The biosynthesis of aflatoxins begins with the norsolorinic acid synthase aflC that combines a hexanoyl starter unit produced by the fatty acid synthase aflA/aflB and 7 malonyl-CoA extender units to synthesize the precursor NOR. The second step is the conversion of NOR to averantin and requires the norsolorinic acid ketoreductase aflD, which catalyzes the dehydration of norsolorinic acid to form (1'S)-averantin. The norsolorinic acid reductases aflE and aflF may also play a role in the conversion of NOR to AVN. The cytochrome P450 monooxygenase aflG then catalyzes the hydroxylation of AVN to 5'hydroxyaverantin (HAVN). The next step is performed by the 5'-hydroxyaverantin dehydrogenase aflH that transforms HAVN to 5'-oxoaverantin (OAVN) which is further converted to averufin (AVF) by aflK that plays a dual role in the pathway, as a 5'-oxoaverantin cyclase that mediates conversion of 5'-oxoaverantin, as well as a versicolorin B synthase in a later step in the pathway. The averufin oxidase aflI catalyzes the conversion of AVF to versiconal hemiacetal acetate (VHA). VHA is then the substrate for the versiconal hemiacetal acetate esterase aflJ to yield versiconal (VAL). Versicolorin B synthase aflK then converts VAL to versicolorin B (VERB) by closing the bisfuran ring of aflatoxin which is required for DNA-binding, thus giving to aflatoxin its activity as a mutagen. Then, the activity of the versicolorin B desaturase aflL leads to versicolorin A (VERA). A branch point starts from VERB since it can also be converted to dihydrodemethylsterigmatocystin (DMDHST), probably also by aflL, VERA being a precursor for aflatoxins B1 and G1, and DMDHST for aflatoxins B2 and G2. Next, the versicolorin reductase aflM and the cytochrome P450 monooxygenase aflN are involved in conversion of VERA to demethylsterigmatocystin (DMST). AflX and aflY seem also involved in this step, through probable aflX-mediated epoxide ring-opening step following versicolorin A oxidation and aflY-mediated Baeyer-Villiger oxidation required for the formation of the xanthone ring. The methyltransferase aflO then leads to the modification of DMST to sterigmatocystin (ST), and of DMDHST to dihydrosterigmatocystin (DHST). Both ST and DHST are then substrates of the O-methyltransferase aflP to yield O-methylsterigmatocystin (OMST) and dihydro-O-methylsterigmatocystin (DHOMST), respectively. Finally OMST is converted to aflatoxins B1 and G1, and DHOMST to aflatoxins B2 and G2, via the action of several enzymes including O-methylsterigmatocystin oxidoreductase aflQ, the cytochrome P450 monooxygenase aflU, but also the NADH-dependent flavin oxidoreductase nadA which is specifically required for the synthesis of AFG1. The polypeptide is Cytochrome P450 monooxygenase aflV (Aspergillus parasiticus (strain ATCC 56775 / NRRL 5862 / SRRC 143 / SU-1)).